We begin with the raw amino-acid sequence, 289 residues long: 4-hydroxybenzoate octaprenyltransferase (289 aa).

9 helical membrane passes run 22 to 42, 45 to 65, 96 to 116, 118 to 138, 140 to 160, 164 to 184, 211 to 231, 236 to 256, and 267 to 287; these read AGWL…SHGF, WHLV…GCCI, LGLG…TNAV, IAWS…KRYV, MPQA…FAAV, VPPL…AYDT, VAGV…ALIQ, AIFM…GWLI, and AFRL…LSYW.

This sequence belongs to the UbiA prenyltransferase family. It depends on Mg(2+) as a cofactor.

Its subcellular location is the cell inner membrane. It carries out the reaction all-trans-octaprenyl diphosphate + 4-hydroxybenzoate = 4-hydroxy-3-(all-trans-octaprenyl)benzoate + diphosphate. The protein operates within cofactor biosynthesis; ubiquinone biosynthesis. Catalyzes the prenylation of para-hydroxybenzoate (PHB) with an all-trans polyprenyl group. Mediates the second step in the final reaction sequence of ubiquinone-8 (UQ-8) biosynthesis, which is the condensation of the polyisoprenoid side chain with PHB, generating the first membrane-bound Q intermediate 3-octaprenyl-4-hydroxybenzoate. This chain is 4-hydroxybenzoate octaprenyltransferase, found in Polaromonas naphthalenivorans (strain CJ2).